A 735-amino-acid polypeptide reads, in one-letter code: uncharacterized protein (735 aa).

Positions 25 to 175 (DLSCLSPDLL…CIAAVLAGLL (151 aa)) constitute a GAF domain. A PAS domain is found at 185-255 (SEAARRAMLD…RQGFMRHLAT (71 aa)). The PAC domain maps to 263-313 (RLVEVEALRADGSVFPAELTVNEHRAGGRRLFSAFVRDISDRITSRRALER). The GGDEF domain occupies 342-464 (GAVVLMLRDL…DGHLLHFAEH (123 aa)). Positions 472-732 (RLELEMALRD…VAGTLPETLA (261 aa)) constitute an EAL domain.

This is an uncharacterized protein from Azorhizobium caulinodans (strain ATCC 43989 / DSM 5975 / JCM 20966 / LMG 6465 / NBRC 14845 / NCIMB 13405 / ORS 571).